The following is an 81-amino-acid chain: Costars family protein ABRACL (81 aa).

The protein belongs to the costars family.

The polypeptide is Costars family protein ABRACL (abracl) (Danio rerio (Zebrafish)).